Reading from the N-terminus, the 643-residue chain is Asparagine synthetase domain-containing protein 1 (643 aa).

Cysteine 2 functions as the For GATase activity in the catalytic mechanism. The Glutamine amidotransferase type-2 domain maps to 2–184; it reads CGICCSVNFS…ASGLFRIDLK (183 aa). One can recognise an Asparagine synthetase domain in the interval 285-601; sequence QFIDVLSVAV…GLTASALLPK (317 aa).

This is Asparagine synthetase domain-containing protein 1 (ASNSD1) from Homo sapiens (Human).